The primary structure comprises 473 residues: Cysteine--tRNA ligase (473 aa).

Cysteine 28 serves as a coordination point for Zn(2+). Positions 30–40 (MTVYDYCHLGH) match the 'HIGH' region motif. Positions 209, 234, and 238 each coordinate Zn(2+). The short motif at 282–286 (KMSKS) is the 'KMSKS' region element. Lysine 285 serves as a coordination point for ATP.

Belongs to the class-I aminoacyl-tRNA synthetase family. As to quaternary structure, monomer. Zn(2+) serves as cofactor.

It localises to the cytoplasm. The enzyme catalyses tRNA(Cys) + L-cysteine + ATP = L-cysteinyl-tRNA(Cys) + AMP + diphosphate. This chain is Cysteine--tRNA ligase, found in Neisseria meningitidis serogroup B (strain ATCC BAA-335 / MC58).